Reading from the N-terminus, the 100-residue chain is Putative ESAT-6-like protein Y (100 aa).

It belongs to the WXG100 family.

This Mycobacterium leprae (strain TN) protein is Putative ESAT-6-like protein Y.